We begin with the raw amino-acid sequence, 427 residues long: MALKITGKSEGQLQLHLYTKQKQFAVPDVPYSIRANVSNKELNVLINTLLKDSGNSEAGKVEFDFLLNGEFVKIPLGQHLKEREISFEDTVELEYVERYPAPEPQDCLLHDDWVSAVEAKDNWILTGCYDNTLNIWTTKGKHKLTIPGHIAPVKGVTWISLDEEKGVFASASQDQTVMLWEWNVKANSVECVQVCKGHERGVDCIAANRSKTRMATGSWDTMLKIWSTDVRNDGDSQPSTSKRQKLDTEKARTPVLTLAGHRECISGVQWIDDNTLVTSSWDHTIKIWDLALSGIKSEICGHKSFFDLSYSHLNGLIIAASPDKNLRLYDPKSNQGTIVKNTYLGHTQWVQSVRWSTTNEYLFVSGAYDNHVKLWDYRSPKAPIFELIGHEDKVLACDWSNPKFILSGGSDNSVRVFKSKIAIGEQK.

Residues 13–97 (LQLHLYTKQK…EDTVELEYVE (85 aa)) form a ubiquitin-like (UBL) domain region. WD repeat units follow at residues 109–146 (LHDD…KLTI), 148–190 (GHIA…NSVE), 197–236 (GHER…DGDS), 260–298 (GHRE…IKSE), 301–339 (GHKS…GTIV), 345–385 (GHTQ…APIF), and 389–427 (GHED…GEQK).

Belongs to the WD repeat WDR12/YTM1 family.

It is found in the nucleus. The protein localises to the nucleolus. It localises to the nucleoplasm. Functionally, required for maturation of ribosomal RNAs and formation of the large ribosomal subunit. The chain is Ribosome biogenesis protein WDR12 homolog from Aedes aegypti (Yellowfever mosquito).